The primary structure comprises 246 residues: Uridylate kinase (246 aa).

16–19 (KLGG) lines the ATP pocket. UMP is bound at residue glycine 57. The ATP site is built by glycine 58 and arginine 62. UMP-binding positions include aspartate 77 and 138–145 (MGMPYFST). ATP contacts are provided by tyrosine 171 and aspartate 174.

The protein belongs to the UMP kinase family. In terms of assembly, homohexamer.

It localises to the cytoplasm. It catalyses the reaction UMP + ATP = UDP + ADP. It functions in the pathway pyrimidine metabolism; CTP biosynthesis via de novo pathway; UDP from UMP (UMPK route): step 1/1. With respect to regulation, inhibited by UTP. Its function is as follows. Catalyzes the reversible phosphorylation of UMP to UDP. In Corynebacterium jeikeium (strain K411), this protein is Uridylate kinase.